The following is a 100-amino-acid chain: NAD(P)H-quinone oxidoreductase subunit 4L, chloroplastic (100 aa).

A run of 3 helical transmembrane segments spans residues 1–21, 30–50, and 60–80; these read MLEN…YGLT, LMCL…FSSF, and VFAI…LAII.

This sequence belongs to the complex I subunit 4L family. NDH is composed of at least 16 different subunits, 5 of which are encoded in the nucleus.

The protein localises to the plastid. It is found in the chloroplast thylakoid membrane. The catalysed reaction is a plastoquinone + NADH + (n+1) H(+)(in) = a plastoquinol + NAD(+) + n H(+)(out). The enzyme catalyses a plastoquinone + NADPH + (n+1) H(+)(in) = a plastoquinol + NADP(+) + n H(+)(out). In terms of biological role, NDH shuttles electrons from NAD(P)H:plastoquinone, via FMN and iron-sulfur (Fe-S) centers, to quinones in the photosynthetic chain and possibly in a chloroplast respiratory chain. The immediate electron acceptor for the enzyme in this species is believed to be plastoquinone. Couples the redox reaction to proton translocation, and thus conserves the redox energy in a proton gradient. In Staurastrum punctulatum (Green alga), this protein is NAD(P)H-quinone oxidoreductase subunit 4L, chloroplastic.